We begin with the raw amino-acid sequence, 257 residues long: Glucanase inhibitor protein 1 (257 aa).

Positions 1 to 28 are cleaved as a signal peptide; the sequence is MKVFPALTSALVALGTAGVEAEHVQRSL. The Peptidase S1 domain maps to 29 to 256; the sequence is VMGGGTVPVG…GLEWINSVIK (228 aa). C56 and C72 are disulfide-bonded. 2 N-linked (GlcNAc...) asparagine glycosylation sites follow: N107 and N180. 2 disulfides stabilise this stretch: C181/C191 and C201/C232. N-linked (GlcNAc...) asparagine glycosylation occurs at N213.

The protein belongs to the peptidase S1 family. Interacts with host endoglucanases EGaseA.

The protein localises to the secreted. Secreted effector that suppresses host plant glucan elicitor-mediated defense responses. Targets host endoglucanase EGaseA and inhibits the EGaseA-mediated release of elicitor-active glucan oligosaccharides from P.sojae cell walls. The protein is Glucanase inhibitor protein 1 of Phytophthora sojae (Soybean stem and root rot agent).